Here is a 284-residue protein sequence, read N- to C-terminus: Putative mitochondrial carrier protein PET8 (284 aa).

Solcar repeat units lie at residues 2-75 (NTFF…MKVK), 92-178 (IDTT…LKKT), and 192-271 (KGAI…VHSL). 6 consecutive transmembrane segments (helical) span residues 5–25 (FLSL…FFPI), 50–70 (GLGS…ISYD), 98–118 (MLSS…AEVV), 153–169 (GWST…CIQF), 194–214 (AICG…LDFL), and 252–272 (MWIS…HSLL).

This sequence belongs to the mitochondrial carrier (TC 2.A.29) family.

The protein localises to the mitochondrion inner membrane. The polypeptide is Putative mitochondrial carrier protein PET8 (PET8) (Saccharomyces cerevisiae (strain ATCC 204508 / S288c) (Baker's yeast)).